Consider the following 285-residue polypeptide: Seipin (285 aa).

Topologically, residues 1-16 (MKINVSRPLQFLQWSS) are cytoplasmic. Residues 17-37 (YIVVAFLIQLLIILPLSILIY) form a helical membrane-spanning segment. Residues 38–244 (HDFYLRLLPA…GLRNLMLRKR (207 aa)) lie on the Lumenal side of the membrane. A helical membrane pass occupies residues 245–265 (FLSYIIGISIFHCIICVLFFI). Residues 266–285 (TGCTAFIFVRKGQEKSKKHS) are Cytoplasmic-facing.

Belongs to the seipin family.

It is found in the endoplasmic reticulum membrane. In terms of biological role, involved in lipid metabolism and lipid droplet (LD) morphology, number, and size. Facilitates initiation of LD formation, and ensures that vectorial budding of LDs from the ER is directed towards the cytoplasm. This chain is Seipin, found in Saccharomyces cerevisiae (strain ATCC 204508 / S288c) (Baker's yeast).